The sequence spans 320 residues: Ribosomal large subunit pseudouridine synthase D (320 aa).

Residues 18–90 (QRLDQIAAQL…IELEIVYEDE (73 aa)) form the S4 RNA-binding domain. Asp138 is an active-site residue.

The protein belongs to the pseudouridine synthase RluA family.

The protein resides in the cytoplasm. It carries out the reaction uridine(1911/1915/1917) in 23S rRNA = pseudouridine(1911/1915/1917) in 23S rRNA. Responsible for synthesis of pseudouridine from uracil at positions 1911, 1915 and 1917 in 23S ribosomal RNA. The polypeptide is Ribosomal large subunit pseudouridine synthase D (rluD) (Pseudomonas aeruginosa (strain ATCC 15692 / DSM 22644 / CIP 104116 / JCM 14847 / LMG 12228 / 1C / PRS 101 / PAO1)).